The following is a 429-amino-acid chain: O-methyltransferase phnC (429 aa).

S-adenosyl-L-methionine is bound at residue Asp285.

It belongs to the class I-like SAM-binding methyltransferase superfamily. Cation-independent O-methyltransferase family. COMT subfamily.

The enzyme catalyses (2'R)-atrovenetin + S-adenosyl-L-methionine = deoxyherqueinone + S-adenosyl-L-homocysteine + H(+). It functions in the pathway secondary metabolite biosynthesis. Its function is as follows. O-methyltransferase; part of the gene cluster that mediates the biosynthesis of phenalenones such as herqueinone, compounds that have been reported to treat tumors, bacterial infections and/or mycoses, and rheumatic diseases. The non-reducing polyketide synthase phnA synthesizes the heptaketide backbone and cyclizes it into the angular, hemiketal-containing naphtho-gamma-pyrone prephenalenone. The product template (PT) domain of phnA catalyzes only the C4-C9 aldol condensation, which is unprecedented among known PT domains. The transformation of prephenalenone to phenalenones requires an FAD-dependent monooxygenase phnB, which catalyzes the C2 aromatic hydroxylation of prephenalenone and ring opening of the gamma-pyrone ring simultaneously. Subsequent intramolecular deprotonation of C3 phenolic oxygen accelerates phenalenone ring closure to yield the tricyclic phenalenone core with a C2 hydroxylation. The prenyltransferase phnF further catalyzes reverse C-prenylation of phenalenone by direct electrophilic substitution at C6, or possibly via first a forward O-prenylation of a neighboring phenol in phenalenone, followed by a Claisen rearrangement. The hydroalkoxylation enzyme phnH catalyzes the 5-exo-trig cyclization via acid catalysis after the spontaneous deprotonation of 7-OH, which leads to the formation of the dihydrobenzofuran atrovenetin. Atrovenetin is further converted to deoxyherqueinone by the O-methyltransferase phnC which can methylate C2-OH to stabilize the northern portion of the phenalenone core. Finally, the oxidoreductase phnG converts deoxyherqueinone to herqueinone via C6 hydroxylation. This Penicillium herquei protein is O-methyltransferase phnC.